The chain runs to 193 residues: Ribonuclease HII (193 aa).

The RNase H type-2 domain occupies 15–193; that stretch reads CIVAGIDEAG…PYHRRSFRCC (179 aa). A divalent metal cation-binding residues include aspartate 21, glutamate 22, and aspartate 112.

It belongs to the RNase HII family. The cofactor is Mn(2+). Mg(2+) serves as cofactor.

The protein localises to the cytoplasm. It catalyses the reaction Endonucleolytic cleavage to 5'-phosphomonoester.. Functionally, endonuclease that specifically degrades the RNA of RNA-DNA hybrids. The sequence is that of Ribonuclease HII from Rickettsia rickettsii (strain Iowa).